The sequence spans 604 residues: Elongation factor 4 (604 aa).

The tr-type G domain occupies 9–191 (DAIRNFCIIA…AVISRVPAPA (183 aa)). Residues 21-26 (DHGKST) and 138-141 (NKID) each bind GTP.

The protein belongs to the TRAFAC class translation factor GTPase superfamily. Classic translation factor GTPase family. LepA subfamily.

Its subcellular location is the cell inner membrane. It catalyses the reaction GTP + H2O = GDP + phosphate + H(+). Functionally, required for accurate and efficient protein synthesis under certain stress conditions. May act as a fidelity factor of the translation reaction, by catalyzing a one-codon backward translocation of tRNAs on improperly translocated ribosomes. Back-translocation proceeds from a post-translocation (POST) complex to a pre-translocation (PRE) complex, thus giving elongation factor G a second chance to translocate the tRNAs correctly. Binds to ribosomes in a GTP-dependent manner. The sequence is that of Elongation factor 4 from Prosthecochloris aestuarii (strain DSM 271 / SK 413).